We begin with the raw amino-acid sequence, 288 residues long: Protoheme IX farnesyltransferase (288 aa).

9 helical membrane-spanning segments follow: residues 16-36, 37-57, 88-108, 111-131, 138-158, 162-182, 210-230, 236-256, and 265-285; these read VWSL…NRFT, LTNI…SMGA, VKGL…LLFF, YLAA…YSYL, WNII…WYTV, FSVL…IHVW, AICI…PVFF, TYMI…VLFV, and LKLF…VLIF.

The protein belongs to the UbiA prenyltransferase family. Protoheme IX farnesyltransferase subfamily.

Its subcellular location is the cell membrane. The catalysed reaction is heme b + (2E,6E)-farnesyl diphosphate + H2O = Fe(II)-heme o + diphosphate. The protein operates within porphyrin-containing compound metabolism; heme O biosynthesis; heme O from protoheme: step 1/1. In terms of biological role, converts heme B (protoheme IX) to heme O by substitution of the vinyl group on carbon 2 of heme B porphyrin ring with a hydroxyethyl farnesyl side group. This is Protoheme IX farnesyltransferase from Thermoplasma volcanium (strain ATCC 51530 / DSM 4299 / JCM 9571 / NBRC 15438 / GSS1).